We begin with the raw amino-acid sequence, 315 residues long: MMVNIPVIENFLSNSCFLILFLTTVYYWLKIGFGGKSSFSFTGLTGYGSALCCLTLQLILRWVDSGHFPLSNLYESLIFLAWCLLLLYIYIEVSTKTLFLGVLTSPAILCLVAFTDFSLPTELQQSTPLVPALQSNWLVMHVTVMIASYAALLLGCFIAIAYLVLSKFFIKTTFVTAPLSSQNTVLRQESFLEEKQKTDIVFEKNDKNLKFLFFLDNLSYRTIGIGFCFLTLGILSGAIWANETWGNYWSWDPKETWAFITWLTFACYLHSRLVGGWTGSKPALVASFGFLVVWVCYLGVNLLGQGLHSYGFLNV.

Transmembrane regions (helical) follow at residues 15–35 (SCFLILFLTTVYYWLKIGFGG), 39–59 (FSFTGLTGYGSALCCLTLQLI), 73–93 (LYESLIFLAWCLLLLYIYIEV), 97–117 (TLFLGVLTSPAILCLVAFTDF), 144–164 (VMIASYAALLLGCFIAIAYLV), 222–242 (TIGIGFCFLTLGILSGAIWAN), 257–277 (WAFITWLTFACYLHSRLVGGW), and 283–303 (ALVASFGFLVVWVCYLGVNLL).

It belongs to the CcmF/CycK/Ccl1/NrfE/CcsA family. May interact with Ccs1.

Its subcellular location is the plastid. The protein resides in the chloroplast thylakoid membrane. Required during biogenesis of c-type cytochromes (cytochrome c6 and cytochrome f) at the step of heme attachment. The chain is Cytochrome c biogenesis protein CcsA from Chlorella vulgaris (Green alga).